Consider the following 106-residue polypeptide: uncharacterized protein (106 aa).

Residues 1 to 27 (MHHFVPSISLFMASVSFSVFFSHLATS) form the signal peptide. The chain crosses the membrane as a helical span at residues 42 to 62 (TLFSMVPLINSSFNLSVFLFF).

The protein localises to the membrane. This is an uncharacterized protein from Saccharomyces cerevisiae (strain ATCC 204508 / S288c) (Baker's yeast).